The sequence spans 96 residues: Small ribosomal subunit protein bS6 (96 aa).

It belongs to the bacterial ribosomal protein bS6 family.

In terms of biological role, binds together with bS18 to 16S ribosomal RNA. This Corynebacterium aurimucosum (strain ATCC 700975 / DSM 44827 / CIP 107346 / CN-1) (Corynebacterium nigricans) protein is Small ribosomal subunit protein bS6.